Here is a 153-residue protein sequence, read N- to C-terminus: Partner of bursicon (153 aa).

The signal sequence occupies residues 1–35 (MCNSVRTALAASNCCSIVLCCVLLLTLTLTVAVTA). Disulfide bonds link cysteine 44-cysteine 102, cysteine 68-cysteine 117, cysteine 77-cysteine 143, cysteine 81-cysteine 145, and cysteine 99-cysteine 148. A CTCK domain is found at 44 to 139 (CETLPSEIHL…SATMEIRLKE (96 aa)).

Heterodimer of burs and pburs.

The protein resides in the secreted. In terms of biological role, final heterodimeric neurohormone released at the end of the molting cycle, involved in the sclerotization (tanning) of the insect cuticle, melanization and wing spreading. In Anopheles gambiae (African malaria mosquito), this protein is Partner of bursicon.